The chain runs to 876 residues: Phosphoenolpyruvate carboxylase (876 aa).

Active-site residues include H138 and K543.

This sequence belongs to the PEPCase type 1 family. Mg(2+) serves as cofactor.

The enzyme catalyses oxaloacetate + phosphate = phosphoenolpyruvate + hydrogencarbonate. In terms of biological role, forms oxaloacetate, a four-carbon dicarboxylic acid source for the tricarboxylic acid cycle. The chain is Phosphoenolpyruvate carboxylase from Pseudomonas fluorescens (strain Pf0-1).